The sequence spans 301 residues: Averufin oxidase A (301 aa).

Positions methionine 1–alanine 23 are cleaved as a signal peptide. 3 N-linked (GlcNAc...) asparagine glycosylation sites follow: asparagine 62, asparagine 86, and asparagine 190.

Belongs to the avfA family.

Its pathway is mycotoxin biosynthesis. Functionally, averufin oxidase A; part of the fragmented gene cluster that mediates the biosynthesis of dothistromin (DOTH), a polyketide toxin very similar in structure to the aflatoxin precursor, versicolorin B. The first step of the pathway is the conversion of acetate to norsolorinic acid (NOR) and requires the fatty acid synthase subunits hexA and hexB, as well as the polyketide synthase pksA. PksA combines a hexanoyl starter unit and 7 malonyl-CoA extender units to synthesize the precursor NOR. The hexanoyl starter unit is provided to the acyl-carrier protein (ACP) domain by the fungal fatty acid synthase hexA/hexB. The second step is the conversion of NOR to averantin (AVN) and requires the norsolorinic acid ketoreductase nor1, which catalyzes the dehydration of norsolorinic acid to form (1'S)-averantin. The cytochrome P450 monooxygenase avnA then catalyzes the hydroxylation of AVN to 5'hydroxyaverantin (HAVN). The next step is performed by adhA that transforms HAVN to averufin (AVF). Averufin might then be converted to hydroxyversicolorone by cypX and avfA. Hydroxyversicolorone is further converted versiconal hemiacetal acetate (VHA) by moxY. VHA is then the substrate for the versiconal hemiacetal acetate esterase est1 to yield versiconal (VAL). Versicolorin B synthase vbsA then converts VAL to versicolorin B (VERB) by closing the bisfuran ring. Then, the activity of the versicolorin B desaturase verB leads to versicolorin A (VERA). DotB, a predicted chloroperoxidase, may perform epoxidation of the A-ring of VERA. Alternatively, a cytochrome P450, such as cypX or avnA could catalyze this step. It is also possible that another, uncharacterized, cytochrome P450 enzyme is responsible for this step. Opening of the epoxide could potentially be achieved by the epoxide hydrolase epoA. However, epoA seems not to be required for DOTH biosynthesis, but other epoxide hydrolases may have the ability to complement this hydrolysis. Alternatively, opening of the epoxide ring could be achieved non-enzymatically. The next step is the deoxygenation of ring A to yield the 5,8-dihydroxyanthraquinone which is most likely catalyzed by the NADPH dehydrogenase encoded by ver1. The last stages of DOTH biosynthesis are proposed to involve hydroxylation of the bisfuran. OrdB and norB might have oxidative roles here. An alternative possibility is that cytochrome P450 monoogenases such as avnA and cypX might perform these steps in addition to previously proposed steps. The polypeptide is Averufin oxidase A (Dothistroma septosporum (Red band needle blight fungus)).